A 283-amino-acid chain; its full sequence is Small ribosomal subunit protein uS3 (283 aa).

A KH type-2 domain is found at 39–107; sequence VRAYLKTKLK…PVHVNIEEIR (69 aa). The interval 219–283 is disordered; it reads ASDDDKKRRG…AAVSAEKAGE (65 aa). Residues 221 to 236 show a composition bias toward basic and acidic residues; it reads DDDKKRRGPRRDDGKP. A compositionally biased stretch (low complexity) spans 237 to 260; it reads SGRPRAPRPEGQPGAAAPGSAPAA.

This sequence belongs to the universal ribosomal protein uS3 family. As to quaternary structure, part of the 30S ribosomal subunit. Forms a tight complex with proteins S10 and S14.

Functionally, binds the lower part of the 30S subunit head. Binds mRNA in the 70S ribosome, positioning it for translation. The sequence is that of Small ribosomal subunit protein uS3 from Janthinobacterium sp. (strain Marseille) (Minibacterium massiliensis).